A 702-amino-acid chain; its full sequence is Polyphosphate kinase (702 aa).

N55 serves as a coordination point for ATP. Mg(2+)-binding residues include R389 and R419. H449 functions as the Phosphohistidine intermediate in the catalytic mechanism. ATP-binding residues include Y482, R578, and H606.

This sequence belongs to the polyphosphate kinase 1 (PPK1) family. Mg(2+) is required as a cofactor. Post-translationally, an intermediate of this reaction is the autophosphorylated ppk in which a phosphate is covalently linked to a histidine residue through a N-P bond.

The catalysed reaction is [phosphate](n) + ATP = [phosphate](n+1) + ADP. Catalyzes the reversible transfer of the terminal phosphate of ATP to form a long-chain polyphosphate (polyP). The chain is Polyphosphate kinase from Bacillus cereus (strain ATCC 14579 / DSM 31 / CCUG 7414 / JCM 2152 / NBRC 15305 / NCIMB 9373 / NCTC 2599 / NRRL B-3711).